The sequence spans 151 residues: uncharacterized protein (151 aa).

Residues 1 to 48 (MRMAPTESTEGRRLWPGPREGGSGKETTSEKLSNLPRPHSYSPKRADA) are disordered.

This is an uncharacterized protein from Homo sapiens (Human).